Here is a 192-residue protein sequence, read N- to C-terminus: dCTP deaminase, dUMP-forming (192 aa).

DCTP contacts are provided by residues 101 to 106, D119, 127 to 129, Q148, Y162, and Q174; these read KSSLGR and TLE. The active-site Proton donor/acceptor is the E129. The segment at 169–192 is disordered; it reads SRYQGQRGPTPSRSWQSWRTWPTR. Positions 171 to 192 are enriched in polar residues; sequence YQGQRGPTPSRSWQSWRTWPTR.

This sequence belongs to the dCTP deaminase family. In terms of assembly, homotrimer.

It catalyses the reaction dCTP + 2 H2O = dUMP + NH4(+) + diphosphate. The protein operates within pyrimidine metabolism; dUMP biosynthesis; dUMP from dCTP: step 1/1. Its function is as follows. Bifunctional enzyme that catalyzes both the deamination of dCTP to dUTP and the hydrolysis of dUTP to dUMP without releasing the toxic dUTP intermediate. The chain is dCTP deaminase, dUMP-forming from Salinispora tropica (strain ATCC BAA-916 / DSM 44818 / JCM 13857 / NBRC 105044 / CNB-440).